The sequence spans 89 residues: uncharacterized protein (89 aa).

3 helical membrane-spanning segments follow: residues 5 to 25, 36 to 56, and 67 to 87; these read AYLVLINLCGFWVMGIDKRKA, RLWLIAIVFGALGVWLGMQTF, and YGVPLLLVIEAILIAIYYSPF.

The protein resides in the cell membrane. This is an uncharacterized protein from Bacillus subtilis (strain 168).